The following is a 473-amino-acid chain: Arginine biosynthesis bifunctional protein ArgJ, mitochondrial (473 aa).

6 residues coordinate substrate: Thr201, Lys230, Thr241, Glu328, Asn468, and Thr473. Thr241 functions as the Nucleophile in the catalytic mechanism.

Belongs to the ArgJ family. As to quaternary structure, heterodimer of an alpha and a beta chain. The alpha and beta chains are autoproteolytically processed from a single precursor protein within the mitochondrion.

Its subcellular location is the mitochondrion matrix. It carries out the reaction N(2)-acetyl-L-ornithine + L-glutamate = N-acetyl-L-glutamate + L-ornithine. It catalyses the reaction L-glutamate + acetyl-CoA = N-acetyl-L-glutamate + CoA + H(+). It functions in the pathway amino-acid biosynthesis; L-arginine biosynthesis; L-ornithine and N-acetyl-L-glutamate from L-glutamate and N(2)-acetyl-L-ornithine (cyclic): step 1/1. It participates in amino-acid biosynthesis; L-arginine biosynthesis; N(2)-acetyl-L-ornithine from L-glutamate: step 1/4. Catalyzes two activities which are involved in the cyclic version of arginine biosynthesis: the synthesis of acetylglutamate from glutamate and acetyl-CoA, and of ornithine by transacetylation between acetylornithine and glutamate. The sequence is that of Arginine biosynthesis bifunctional protein ArgJ, mitochondrial from Ajellomyces capsulatus (strain H143) (Darling's disease fungus).